The chain runs to 353 residues: UPF0283 membrane protein YcjF (353 aa).

Residues 1–19 (MSEPLKPRIDFAEPLKEEP) are compositionally biased toward basic and acidic residues. Positions 1-35 (MSEPLKPRIDFAEPLKEEPTSAFKAQQTFSEAESR) are disordered. 3 helical membrane passes run 70–90 (MVMG…LQWT), 100–120 (VALG…GSVV), and 213–233 (ESTL…FIAW).

The protein belongs to the UPF0283 family.

It is found in the cell inner membrane. This is UPF0283 membrane protein YcjF from Salmonella choleraesuis (strain SC-B67).